Consider the following 571-residue polypeptide: Proline--tRNA ligase 1 (571 aa).

Belongs to the class-II aminoacyl-tRNA synthetase family. ProS type 1 subfamily. Homodimer.

The protein localises to the cytoplasm. It catalyses the reaction tRNA(Pro) + L-proline + ATP = L-prolyl-tRNA(Pro) + AMP + diphosphate. Catalyzes the attachment of proline to tRNA(Pro) in a two-step reaction: proline is first activated by ATP to form Pro-AMP and then transferred to the acceptor end of tRNA(Pro). As ProRS can inadvertently accommodate and process non-cognate amino acids such as alanine and cysteine, to avoid such errors it has two additional distinct editing activities against alanine. One activity is designated as 'pretransfer' editing and involves the tRNA(Pro)-independent hydrolysis of activated Ala-AMP. The other activity is designated 'posttransfer' editing and involves deacylation of mischarged Ala-tRNA(Pro). The misacylated Cys-tRNA(Pro) is not edited by ProRS. This Clostridioides difficile (strain 630) (Peptoclostridium difficile) protein is Proline--tRNA ligase 1.